A 364-amino-acid chain; its full sequence is Probable dual-specificity RNA methyltransferase RlmN (364 aa).

Residue E107 is the Proton acceptor of the active site. Residues 113-346 (HEYGNSVCVT…ATIRREQGAD (234 aa)) enclose the Radical SAM core domain. A disulfide bridge links C120 with C351. [4Fe-4S] cluster is bound by residues C127, C131, and C134. S-adenosyl-L-methionine-binding positions include 177–178 (GE), S209, 232–234 (SLH), and N308. The S-methylcysteine intermediate role is filled by C351.

The protein belongs to the radical SAM superfamily. RlmN family. [4Fe-4S] cluster serves as cofactor.

The protein localises to the cytoplasm. It catalyses the reaction adenosine(2503) in 23S rRNA + 2 reduced [2Fe-2S]-[ferredoxin] + 2 S-adenosyl-L-methionine = 2-methyladenosine(2503) in 23S rRNA + 5'-deoxyadenosine + L-methionine + 2 oxidized [2Fe-2S]-[ferredoxin] + S-adenosyl-L-homocysteine. The catalysed reaction is adenosine(37) in tRNA + 2 reduced [2Fe-2S]-[ferredoxin] + 2 S-adenosyl-L-methionine = 2-methyladenosine(37) in tRNA + 5'-deoxyadenosine + L-methionine + 2 oxidized [2Fe-2S]-[ferredoxin] + S-adenosyl-L-homocysteine. Specifically methylates position 2 of adenine 2503 in 23S rRNA and position 2 of adenine 37 in tRNAs. Confers resistance to some classes of antibiotics. The chain is Probable dual-specificity RNA methyltransferase RlmN from Staphylococcus saprophyticus subsp. saprophyticus (strain ATCC 15305 / DSM 20229 / NCIMB 8711 / NCTC 7292 / S-41).